The primary structure comprises 178 residues: Cytochrome b6-f complex iron-sulfur subunit (178 aa).

The helical transmembrane segment at L20–I42 threads the bilayer. One can recognise a Rieske domain in the interval W68–V161. Positions 107, 109, 125, and 128 each coordinate [2Fe-2S] cluster. C112 and C127 form a disulfide bridge.

Belongs to the Rieske iron-sulfur protein family. As to quaternary structure, the 4 large subunits of the cytochrome b6-f complex are cytochrome b6, subunit IV (17 kDa polypeptide, PetD), cytochrome f and the Rieske protein, while the 4 small subunits are PetG, PetL, PetM and PetN. The complex functions as a dimer. It depends on [2Fe-2S] cluster as a cofactor.

The protein localises to the cellular thylakoid membrane. It catalyses the reaction 2 oxidized [plastocyanin] + a plastoquinol + 2 H(+)(in) = 2 reduced [plastocyanin] + a plastoquinone + 4 H(+)(out). Component of the cytochrome b6-f complex, which mediates electron transfer between photosystem II (PSII) and photosystem I (PSI), cyclic electron flow around PSI, and state transitions. The sequence is that of Cytochrome b6-f complex iron-sulfur subunit from Prochlorococcus marinus (strain MIT 9303).